A 234-amino-acid chain; its full sequence is Large ribosomal subunit protein bL25 (234 aa).

Residues methionine 1–arginine 24 are disordered.

It belongs to the bacterial ribosomal protein bL25 family. CTC subfamily. Part of the 50S ribosomal subunit; part of the 5S rRNA/L5/L18/L25 subcomplex. Contacts the 5S rRNA. Binds to the 5S rRNA independently of L5 and L18.

In terms of biological role, this is one of the proteins that binds to the 5S RNA in the ribosome where it forms part of the central protuberance. This chain is Large ribosomal subunit protein bL25, found in Rhodopseudomonas palustris (strain BisB5).